The chain runs to 445 residues: Exodeoxyribonuclease 7 large subunit (445 aa).

It belongs to the XseA family. In terms of assembly, heterooligomer composed of large and small subunits.

The protein localises to the cytoplasm. It carries out the reaction Exonucleolytic cleavage in either 5'- to 3'- or 3'- to 5'-direction to yield nucleoside 5'-phosphates.. Its function is as follows. Bidirectionally degrades single-stranded DNA into large acid-insoluble oligonucleotides, which are then degraded further into small acid-soluble oligonucleotides. This is Exodeoxyribonuclease 7 large subunit from Staphylococcus saprophyticus subsp. saprophyticus (strain ATCC 15305 / DSM 20229 / NCIMB 8711 / NCTC 7292 / S-41).